Reading from the N-terminus, the 264-residue chain is Thiazole synthase (264 aa).

Lys-106 functions as the Schiff-base intermediate with DXP in the catalytic mechanism. Residues Gly-167, 193–194 (AG), and 215–216 (NS) contribute to the 1-deoxy-D-xylulose 5-phosphate site.

Belongs to the ThiG family. In terms of assembly, homotetramer. Forms heterodimers with either ThiH or ThiS.

The protein localises to the cytoplasm. The catalysed reaction is [ThiS sulfur-carrier protein]-C-terminal-Gly-aminoethanethioate + 2-iminoacetate + 1-deoxy-D-xylulose 5-phosphate = [ThiS sulfur-carrier protein]-C-terminal Gly-Gly + 2-[(2R,5Z)-2-carboxy-4-methylthiazol-5(2H)-ylidene]ethyl phosphate + 2 H2O + H(+). Its pathway is cofactor biosynthesis; thiamine diphosphate biosynthesis. Functionally, catalyzes the rearrangement of 1-deoxy-D-xylulose 5-phosphate (DXP) to produce the thiazole phosphate moiety of thiamine. Sulfur is provided by the thiocarboxylate moiety of the carrier protein ThiS. In vitro, sulfur can be provided by H(2)S. The protein is Thiazole synthase of Azotobacter vinelandii (strain DJ / ATCC BAA-1303).